The primary structure comprises 185 residues: Alkyl hydroperoxide reductase AhpD (185 aa).

C131 serves as the catalytic Proton donor. C131 and C134 are oxidised to a cystine. The active-site Cysteine sulfenic acid (-SOH) intermediate is the C134.

The protein belongs to the AhpD family. Homotrimer.

The catalysed reaction is N(6)-[(R)-dihydrolipoyl]-L-lysyl-[lipoyl-carrier protein] + a hydroperoxide = N(6)-[(R)-lipoyl]-L-lysyl-[lipoyl-carrier protein] + an alcohol + H2O. Its function is as follows. Antioxidant protein with alkyl hydroperoxidase activity. Required for the reduction of the AhpC active site cysteine residues and for the regeneration of the AhpC enzyme activity. This Frankia alni (strain DSM 45986 / CECT 9034 / ACN14a) protein is Alkyl hydroperoxide reductase AhpD.